Here is a 371-residue protein sequence, read N- to C-terminus: 3-dehydroquinate synthase (371 aa).

Residues 72–77, 106–110, 130–131, Lys-143, Lys-152, and 170–173 each bind NAD(+); these read DGEEHK, GVVGD, TT, and TLKT. Residues Glu-185, His-248, and His-265 each coordinate Zn(2+).

It belongs to the sugar phosphate cyclases superfamily. Dehydroquinate synthase family. The cofactor is Co(2+). Requires Zn(2+) as cofactor. NAD(+) serves as cofactor.

It localises to the cytoplasm. The enzyme catalyses 7-phospho-2-dehydro-3-deoxy-D-arabino-heptonate = 3-dehydroquinate + phosphate. The protein operates within metabolic intermediate biosynthesis; chorismate biosynthesis; chorismate from D-erythrose 4-phosphate and phosphoenolpyruvate: step 2/7. Its function is as follows. Catalyzes the conversion of 3-deoxy-D-arabino-heptulosonate 7-phosphate (DAHP) to dehydroquinate (DHQ). The protein is 3-dehydroquinate synthase of Pelotomaculum thermopropionicum (strain DSM 13744 / JCM 10971 / SI).